The primary structure comprises 233 residues: Small ribosomal subunit protein uS2 (233 aa).

The protein belongs to the universal ribosomal protein uS2 family.

This chain is Small ribosomal subunit protein uS2, found in Bacillus cytotoxicus (strain DSM 22905 / CIP 110041 / 391-98 / NVH 391-98).